The following is a 221-amino-acid chain: ATP-dependent Clp protease proteolytic subunit 3 (221 aa).

The active-site Nucleophile is the Ser-118. His-143 is an active-site residue.

The protein belongs to the peptidase S14 family. Fourteen ClpP subunits assemble into 2 heptameric rings which stack back to back to give a disk-like structure with a central cavity, resembling the structure of eukaryotic proteasomes.

It localises to the cytoplasm. The enzyme catalyses Hydrolysis of proteins to small peptides in the presence of ATP and magnesium. alpha-casein is the usual test substrate. In the absence of ATP, only oligopeptides shorter than five residues are hydrolyzed (such as succinyl-Leu-Tyr-|-NHMec, and Leu-Tyr-Leu-|-Tyr-Trp, in which cleavage of the -Tyr-|-Leu- and -Tyr-|-Trp bonds also occurs).. Functionally, cleaves peptides in various proteins in a process that requires ATP hydrolysis. Has a chymotrypsin-like activity. Plays a major role in the degradation of misfolded proteins. The chain is ATP-dependent Clp protease proteolytic subunit 3 from Nocardia farcinica (strain IFM 10152).